We begin with the raw amino-acid sequence, 396 residues long: S-adenosylmethionine synthase (396 aa).

H15 lines the ATP pocket. Residue D17 participates in Mg(2+) binding. E43 provides a ligand contact to K(+). The L-methionine site is built by E56 and Q99. The tract at residues 99–109 is flexible loop; that stretch reads QSGDIAQGVDT. ATP is bound by residues 173–175, 241–242, D250, 256–257, A273, and K277; these read DGK, RF, and RK. D250 serves as a coordination point for L-methionine. K281 contributes to the L-methionine binding site.

This sequence belongs to the AdoMet synthase family. Homotetramer; dimer of dimers. The cofactor is Mg(2+). Requires K(+) as cofactor.

The protein localises to the cytoplasm. The catalysed reaction is L-methionine + ATP + H2O = S-adenosyl-L-methionine + phosphate + diphosphate. It functions in the pathway amino-acid biosynthesis; S-adenosyl-L-methionine biosynthesis; S-adenosyl-L-methionine from L-methionine: step 1/1. In terms of biological role, catalyzes the formation of S-adenosylmethionine (AdoMet) from methionine and ATP. The overall synthetic reaction is composed of two sequential steps, AdoMet formation and the subsequent tripolyphosphate hydrolysis which occurs prior to release of AdoMet from the enzyme. In Nocardioides sp. (strain ATCC BAA-499 / JS614), this protein is S-adenosylmethionine synthase.